A 692-amino-acid chain; its full sequence is Alpha-amylase SusG (692 aa).

Residues 1–22 (MNKHLHFLSLLWLSMLMAFMTA) form the signal peptide. The N-palmitoyl cysteine moiety is linked to residue cysteine 23. A lipid anchor (S-diacylglycerol cysteine) is attached at cysteine 23. Mg(2+)-binding residues include aspartate 73, aspartate 75, aspartate 77, tyrosine 79, and aspartate 81. Asparagine 153 provides a ligand contact to Ca(2+). Starch binding regions lie at residues histidine 154, 260–263 (YYGE), and 330–333 (NIMF). Position 352 (aspartate 352) interacts with Ca(2+). The tract at residues 386–392 (RLDAVKH) is starch binding. Catalysis depends on aspartate 388, which acts as the Nucleophile. Histidine 392 contacts Ca(2+). Glutamate 431 (proton donor) is an active-site residue. Residues aspartate 437 and arginine 457 are each a region of interest (starch binding).

It belongs to the glycosyl hydrolase 13 family. In terms of assembly, monomer. The cofactor is Ca(2+).

The protein localises to the cell outer membrane. The catalysed reaction is Endohydrolysis of (1-&gt;4)-alpha-D-glucosidic linkages in polysaccharides containing three or more (1-&gt;4)-alpha-linked D-glucose units.. The protein operates within glycan degradation; starch degradation. Functionally, alpha-amylase that cleaves starch into oligosaccharides before internalization for degradation, the first step in starch degradation. The polypeptide is Alpha-amylase SusG (susG) (Bacteroides thetaiotaomicron (strain ATCC 29148 / DSM 2079 / JCM 5827 / CCUG 10774 / NCTC 10582 / VPI-5482 / E50)).